The sequence spans 312 residues: Protoheme IX farnesyltransferase (312 aa).

9 helical membrane-spanning segments follow: residues 31 to 51 (LLMK…GLFI), 58 to 78 (PLLS…AGAI), 107 to 127 (TALT…AICV), 130 to 150 (ISSI…TMWL), 157 to 177 (NIVI…SAVT), 184 to 204 (CLML…TLSL), 229 to 249 (YSIL…YFTD), 250 to 270 (IAGL…LCYA), and 286 to 306 (FKYS…EHCI).

The protein belongs to the UbiA prenyltransferase family. Protoheme IX farnesyltransferase subfamily.

Its subcellular location is the cell inner membrane. It catalyses the reaction heme b + (2E,6E)-farnesyl diphosphate + H2O = Fe(II)-heme o + diphosphate. Its pathway is porphyrin-containing compound metabolism; heme O biosynthesis; heme O from protoheme: step 1/1. Converts heme B (protoheme IX) to heme O by substitution of the vinyl group on carbon 2 of heme B porphyrin ring with a hydroxyethyl farnesyl side group. This is Protoheme IX farnesyltransferase from Orientia tsutsugamushi (strain Ikeda) (Rickettsia tsutsugamushi).